Reading from the N-terminus, the 73-residue chain is Translation initiation factor IF-1 (73 aa).

Residues 1 to 73 (MANKEELIEF…SKGRITYRAR (73 aa)) form the S1-like domain.

The protein belongs to the IF-1 family. In terms of assembly, component of the 30S ribosomal translation pre-initiation complex which assembles on the 30S ribosome in the order IF-2 and IF-3, IF-1 and N-formylmethionyl-tRNA(fMet); mRNA recruitment can occur at any time during PIC assembly.

The protein localises to the cytoplasm. One of the essential components for the initiation of protein synthesis. Stabilizes the binding of IF-2 and IF-3 on the 30S subunit to which N-formylmethionyl-tRNA(fMet) subsequently binds. Helps modulate mRNA selection, yielding the 30S pre-initiation complex (PIC). Upon addition of the 50S ribosomal subunit IF-1, IF-2 and IF-3 are released leaving the mature 70S translation initiation complex. In Acinetobacter baylyi (strain ATCC 33305 / BD413 / ADP1), this protein is Translation initiation factor IF-1.